A 104-amino-acid chain; its full sequence is T-complex protein 1 subunit zeta (104 aa).

Gly-24 is an ADP binding site. An ATP-binding site is contributed by Gly-24. Asp-75 is a binding site for Mg(2+). ADP is bound by residues Gly-76, Thr-78, and Ser-79. 2 residues coordinate ATP: Gly-76 and Thr-78.

This sequence belongs to the TCP-1 chaperonin family. In terms of assembly, component of the chaperonin-containing T-complex (TRiC), a hexadecamer composed of two identical back-to-back stacked rings enclosing a protein folding chamber. Each ring is made up of eight different subunits: TCP1/CCT1, CCT2, CCT3, CCT4, CCT5, CCT6A/CCT6, CCT7, CCT8. Interacts with PACRG.

It localises to the cytoplasm. The enzyme catalyses ATP + H2O = ADP + phosphate + H(+). Component of the chaperonin-containing T-complex (TRiC), a molecular chaperone complex that assists the folding of actin, tubulin and other proteins upon ATP hydrolysis. The TRiC complex mediates the folding of WRAP53/TCAB1, thereby regulating telomere maintenance. The sequence is that of T-complex protein 1 subunit zeta (CCT6) from Sus scrofa (Pig).